Here is a 52-residue protein sequence, read N- to C-terminus: Large ribosomal subunit protein bL33 (52 aa).

This sequence belongs to the bacterial ribosomal protein bL33 family.

This is Large ribosomal subunit protein bL33 from Chlamydia abortus (strain DSM 27085 / S26/3) (Chlamydophila abortus).